Here is a 465-residue protein sequence, read N- to C-terminus: Kinesin-like protein KIN-1 (465 aa).

The Kinesin motor domain maps to 3 to 334; that stretch reads NVTVCARFRP…LRFGMRAKHI (332 aa). 87–94 contributes to the ATP binding site; sequence GQTGAGKT. The segment at 338–358 is disordered; that stretch reads PRASEVKSAKAQEEPSSVTKD. Residues 341 to 358 show a composition bias toward basic and acidic residues; it reads SEVKSAKAQEEPSSVTKD. The stretch at 402 to 444 forms a coiled coil; the sequence is VYEDIVSKTIQSLQQAVDELQQKVKKLEAENIGIQEQALRNHE.

This sequence belongs to the TRAFAC class myosin-kinesin ATPase superfamily. Kinesin family. KIN-1 subfamily. As to quaternary structure, homodimer. Interacts with WIP1 and WIP2. Specifically expressed in ovules and anthers.

Kinesin-like motor protein that promotes synapsis and is required for proper crossover distribution in meiosis. Plays a role in the nuclear division cycles during megagametogenesis. This is Kinesin-like protein KIN-1 from Arabidopsis thaliana (Mouse-ear cress).